The primary structure comprises 591 residues: Coiled-coil domain-containing protein 148 (591 aa).

Coiled-coil stretches lie at residues 166-195, 352-417, and 466-498; these read VKKQLKTVFERLRLEQQRIENDLSDWSIKI, MLAK…KKKK, and ERRLMEKKEVALQEAHEDKERARRLEALRKQVA.

The chain is Coiled-coil domain-containing protein 148 (CCDC148) from Homo sapiens (Human).